Consider the following 261-residue polypeptide: Global transcriptional regulator CodY (261 aa).

The interval 1–159 (MPNLLEKTRK…ASTVVGIQLL (159 aa)) is GAF domain. Positions 207–226 (ASVIADRIGITRSVIVNALR) form a DNA-binding region, H-T-H motif.

It belongs to the CodY family.

It localises to the cytoplasm. DNA-binding global transcriptional regulator which is involved in the adaptive response to starvation and acts by directly or indirectly controlling the expression of numerous genes in response to nutrient availability. During rapid exponential growth, CodY is highly active and represses genes whose products allow adaptation to nutrient depletion. This Streptococcus agalactiae serotype Ia (strain ATCC 27591 / A909 / CDC SS700) protein is Global transcriptional regulator CodY.